Consider the following 459-residue polypeptide: Nuclear hormone receptor family member nhr-11 (459 aa).

The segment at residues 2-81 (GPLCAVCESP…AGMRSELVRS (80 aa)) is a DNA-binding region (nuclear receptor). NR C4-type zinc fingers lie at residues 5–26 (CAVC…CKAC) and 42–69 (CAAD…LRKC). Disordered regions lie at residues 90-119 (RRKD…EEMD) and 134-162 (DLPL…SSFD). Residues 97–115 (NSDAAPNSNSPSTRQSSSP) are compositionally biased toward low complexity. The region spanning 188–458 (ENNSILQYYH…SMLHEMLNFQ (271 aa)) is the NR LBD domain.

Belongs to the nuclear hormone receptor family.

It is found in the nucleus. Its function is as follows. Orphan nuclear receptor. This is Nuclear hormone receptor family member nhr-11 (nhr-11) from Caenorhabditis elegans.